Here is a 203-residue protein sequence, read N- to C-terminus: NAD(P)H dehydrogenase (quinone) (203 aa).

A Flavodoxin-like domain is found at 7 to 194 (VLVLYHSSYG…SLARKQGAHV (188 aa)). FMN is bound by residues 13-18 (SSYGHI) and 82-84 (TRF). Position 15 (Y15) interacts with NAD(+). W102 contributes to the substrate binding site. FMN contacts are provided by residues 117 to 122 (STGTGG) and H137.

It belongs to the WrbA family. It depends on FMN as a cofactor.

It catalyses the reaction a quinone + NADH + H(+) = a quinol + NAD(+). The catalysed reaction is a quinone + NADPH + H(+) = a quinol + NADP(+). The protein is NAD(P)H dehydrogenase (quinone) of Parvibaculum lavamentivorans (strain DS-1 / DSM 13023 / NCIMB 13966).